A 151-amino-acid polypeptide reads, in one-letter code: Ribonuclease H (151 aa).

One can recognise an RNase H type-1 domain in the interval 1-141 (MKHVDIFTDG…ADELARKGME (141 aa)). Positions 9, 47, 69, and 133 each coordinate Mg(2+).

This sequence belongs to the RNase H family. As to quaternary structure, monomer. Mg(2+) is required as a cofactor.

It is found in the cytoplasm. The enzyme catalyses Endonucleolytic cleavage to 5'-phosphomonoester.. Its function is as follows. Endonuclease that specifically degrades the RNA of RNA-DNA hybrids. In Rhizobium johnstonii (strain DSM 114642 / LMG 32736 / 3841) (Rhizobium leguminosarum bv. viciae), this protein is Ribonuclease H.